A 104-amino-acid chain; its full sequence is N(4)-acetylcytidine amidohydrolase (104 aa).

The region spanning 6–102 (TFYTRFQQDI…ELYVIAFKKV (97 aa)) is the ASCH domain. Lysine 20 functions as the Proton acceptor in the catalytic mechanism. Threonine 23 serves as the catalytic Nucleophile. The active-site Proton donor is glutamate 73.

Belongs to the N(4)-acetylcytidine amidohydrolase family.

The catalysed reaction is N(4)-acetylcytidine + H2O = cytidine + acetate + H(+). It carries out the reaction N(4)-acetyl-2'-deoxycytidine + H2O = 2'-deoxycytidine + acetate + H(+). It catalyses the reaction N(4)-acetylcytosine + H2O = cytosine + acetate + H(+). Catalyzes the hydrolysis of N(4)-acetylcytidine (ac4C). This Cronobacter sakazakii (strain ATCC BAA-894) (Enterobacter sakazakii) protein is N(4)-acetylcytidine amidohydrolase.